A 110-amino-acid chain; its full sequence is uncharacterized protein (110 aa).

Disordered regions lie at residues 1 to 42 (MEWG…RAQQ) and 66 to 110 (RQLG…AAEP). The stretch at 36-68 (REERAQQLLDAVEQRQRQLLDTIAACEEMLRQL) forms a coiled coil.

This is an uncharacterized protein from Homo sapiens (Human).